The primary structure comprises 570 residues: Arginine--tRNA ligase (570 aa).

The 'HIGH' region motif lies at 127–137 (ANPTGPLHLGH).

Belongs to the class-I aminoacyl-tRNA synthetase family. As to quaternary structure, monomer.

The protein resides in the cytoplasm. The enzyme catalyses tRNA(Arg) + L-arginine + ATP = L-arginyl-tRNA(Arg) + AMP + diphosphate. This Neorickettsia sennetsu (strain ATCC VR-367 / Miyayama) (Ehrlichia sennetsu) protein is Arginine--tRNA ligase.